The primary structure comprises 98 residues: U-megalopygitoxin(1)-Mo1 (98 aa).

A signal peptide spans 1–17; sequence MYRETFVFCVLLAVVSA.

The protein belongs to the caterpillar 1 family. Post-translationally, contains 4 disulfide bonds. Expressed by the venom apparatus.

It localises to the secreted. Its function is as follows. Probable toxin. The protein is U-megalopygitoxin(1)-Mo1 of Megalopyge opercularis (Southern flannel moth).